Reading from the N-terminus, the 389-residue chain is 8-amino-7-oxononanoate synthase (389 aa).

R31 is a substrate binding site. Residue 109–110 (GY) coordinates pyridoxal 5'-phosphate. Position 134 (H134) interacts with substrate. Pyridoxal 5'-phosphate contacts are provided by residues S180, 205–208 (DEAH), and 236–239 (TLSK). The residue at position 239 (K239) is an N6-(pyridoxal phosphate)lysine. T349 is a binding site for substrate.

It belongs to the class-II pyridoxal-phosphate-dependent aminotransferase family. BioF subfamily. In terms of assembly, homodimer. The cofactor is pyridoxal 5'-phosphate.

It catalyses the reaction 6-carboxyhexanoyl-[ACP] + L-alanine + H(+) = (8S)-8-amino-7-oxononanoate + holo-[ACP] + CO2. Its pathway is cofactor biosynthesis; biotin biosynthesis. Functionally, catalyzes the decarboxylative condensation of pimeloyl-[acyl-carrier protein] and L-alanine to produce 8-amino-7-oxononanoate (AON), [acyl-carrier protein], and carbon dioxide. The polypeptide is 8-amino-7-oxononanoate synthase (Mycobacterium ulcerans (strain Agy99)).